The primary structure comprises 120 residues: FK506-binding protein 1B (120 aa).

Positions 1 to 24 (MNPPQGVTKTILRPGNGRDSPHTG) are disordered. Residues 24–120 (GDTVIIDYTG…LVLYVCSPAG (97 aa)) enclose the PPIase FKBP-type domain.

Belongs to the FKBP-type PPIase family. FKBP1 subfamily.

It carries out the reaction [protein]-peptidylproline (omega=180) = [protein]-peptidylproline (omega=0). PPIases accelerate the folding of proteins. It catalyzes the cis-trans isomerization of proline imidic peptide bonds in oligopeptides. This chain is FK506-binding protein 1B (FKBP3), found in Emericella nidulans (strain FGSC A4 / ATCC 38163 / CBS 112.46 / NRRL 194 / M139) (Aspergillus nidulans).